We begin with the raw amino-acid sequence, 87 residues long: Large ribosomal subunit protein bL27 (87 aa).

Residues 1–11 (MASKASGGSTR) show a composition bias toward polar residues. The segment at 1–21 (MASKASGGSTRNGRDSNSKRL) is disordered.

It belongs to the bacterial ribosomal protein bL27 family.

In Hydrogenobaculum sp. (strain Y04AAS1), this protein is Large ribosomal subunit protein bL27.